The sequence spans 345 residues: Arginine-hydroxylase NDUFAF5, mitochondrial (345 aa).

Residues M1–R36 constitute a mitochondrion transit peptide.

The protein belongs to the methyltransferase superfamily. In terms of assembly, interacts with NDUFAF8, leading to stabilize NDUFAF5. Interacts with NDUFS7. Interacts with PYURF (via TRM112 domain); the interaction is direct and stabilizes NDUFAF5 protein.

Its subcellular location is the mitochondrion inner membrane. Functionally, arginine hydroxylase that mediates hydroxylation of 'Arg-111' of NDUFS7 and is involved in the assembly of mitochondrial NADH:ubiquinone oxidoreductase complex (complex I, MT-ND1) at early stages. May also have methyltransferase activity. This is Arginine-hydroxylase NDUFAF5, mitochondrial from Homo sapiens (Human).